The sequence spans 729 residues: MNKGWLELESDPGLFTLLVEDFGVKGVQVEEIYDLQSKCQGPVYGFIFLFKWIEERRSRRKVSTLVDDTSVIDDDIVNNMFFAHQLIPNSCATHALLSVLLNCSSVDLGPTLSRMKDFTKGFSPESKGYAIGNAPELAKAHNSHARPEPRHLPEKQNGLSAVRTMEAFHFVSYVPITGRLFELDGLKVYPIDHGPWGEDEEWTDKARRVIMERIGLATAGEPYHDIRFNLMAVVPDRRIKYEARLHVLKVNRQTVLEALQQLIRVTQPELIQTHKSQESQLPEESKSASNKSPLVLEANRAPAASEGNHTDGAEEAAGSCAQAPSHSPPNKPKLVVKPPGSSLNGVHPNPTPIVQRLPAFLDNHNYAKSPMQEEEDLAAGVGRSRVPVRPPQQYSDDEDDYEDDEEDDVQNTNSALRYKGKGTGKPGALSGSADGQLSVLQPNTINVLAEKLKESQKDLSIPLSIKTSSGAGSPAVAVPTHSQPSPTPSNESTDTASEIGSAFNSPLRSPIRSANPTRPSSPVTSHISKVLFGEDDSLLRVDCIRYNRAVRDLGPVISTGLLHLAEDGVLSPLALTEGGKGSSPSIRPIQGSQGSSSPVEKEVVEATDSREKTGMVRPGEPLSGEKYSPKELLALLKCVEAEIANYEACLKEEVEKRKKFKIDDQRRTHNYDEFICTFISMLAQEGMLANLVEQNISVRRRQGVSIGRLHKQRKPDRRKRSRPYKAKRQ.

Residues 4–235 enclose the UCH catalytic domain; sequence GWLELESDPG…IRFNLMAVVP (232 aa). An Arg-finger motif motif is present at residues 56 to 60; that stretch reads RRSRR. The Nucleophile role is filled by cysteine 91. Histidine 169 (proton donor) is an active-site residue. A Phosphoserine modification is found at serine 292. Positions 301 to 351 are disordered; the sequence is APAASEGNHTDGAEEAAGSCAQAPSHSPPNKPKLVVKPPGSSLNGVHPNPT. Residues 363 to 366 carry the HBM-like motif motif; the sequence is NHNY. Serine 369 and serine 395 each carry phosphoserine. Disordered stretches follow at residues 372–435 and 464–524; these read QEEE…SADG and SIKT…SPVT. Acidic residues predominate over residues 395–409; sequence SDDEDDYEDDEEDDV. The span at 480-524 shows a compositional bias: polar residues; it reads THSQPSPTPSNESTDTASEIGSAFNSPLRSPIRSANPTRPSSPVT. Position 493 is a phosphothreonine (threonine 493). A phosphoserine mark is found at serine 521, serine 537, serine 585, and serine 597. The interval 575 to 623 is disordered; it reads LTEGGKGSSPSIRPIQGSQGSSSPVEKEVVEATDSREKTGMVRPGEPLS. The span at 582 to 598 shows a compositional bias: polar residues; that stretch reads SSPSIRPIQGSQGSSSP. The interaction with BRCA1 stretch occupies residues 596–721; the sequence is SSPVEKEVVE…QRKPDRRKRS (126 aa). Positions 599 to 614 are enriched in basic and acidic residues; that stretch reads VEKEVVEATDSREKTG. Positions 636-656 form a coiled coil; that stretch reads LKCVEAEIANYEACLKEEVEK. Positions 642–686 are interaction with YY1; that stretch reads EIANYEACLKEEVEKRKKFKIDDQRRTHNYDEFICTFISMLAQEG. The ULD domain occupies 670–698; sequence NYDEFICTFISMLAQEGMLANLVEQNISV. An interaction with nucleosomal DNA forming a DNA clamp with ASXL1 region spans residues 699-701; that stretch reads RRR. Positions 699–722 match the Classical bipartite Nuclear localization signal (NLS) motif; it reads RRRQGVSIGRLHKQRKPDRRKRSR. The disordered stretch occupies residues 703-729; sequence GVSIGRLHKQRKPDRRKRSRPYKAKRQ. The interval 713–729 is positively charged C-terminal extension (CTE); that stretch reads RKPDRRKRSRPYKAKRQ. The short motif at 717 to 724 is the Non-classical PY-nuclear localization signal (PY-NLS) element; that stretch reads RRKRSRPY.

The protein belongs to the peptidase C12 family. BAP1 subfamily. As to quaternary structure, core component of the polycomb repressive deubiquitinase (PR-DUB) complex, at least composed of BAP1, one of ASXL1, ASXL2 or (probably) ASXL3, and one of MBD5 or MBD6. The PR-DUB core associates with a number of accessory proteins, including FOXK1, FOXK2, KDM1B, HCFC1, YY1 and OGT; KDM1B specifically associates with ASXL2 PR-DUB complexes. The BAP1 deubiquitinase activity is not required for PR-DUB assembly. Homodimerizes (via coiled-coil hinge-region between the UCH and ULD domains) to mediate assembly of 2 copies of the BAP1-ASXL heterodimer into a bisymmetric tetramer; dimerization enhances association with nucleosomes. The PR-DUB complex associates with nucleosomes to mediate deubiquitination of 'lys-120' of histone H2AK118ub1 substrates; the association requires the positively charged C-terminal tail of BAP1. Interacts (via ULD domain) with ASXL1 (via DEUBAD domain); the interaction is direct and forms a ubiquitin binding cleft. The interaction with ASXL1 stabilizes BAP1 but is not required for nucleosome binding. Associates (via C-terminus) with nucleosome and chromatosome complexes through direct interaction with DNA and the histone3/4 dimer; this association displaces the histone-2A C-terminal tail, extending and orienting the H2AK118ub1 substrate towards the BAP1 deubiquitinase active site. Also interacts (via arginine finger) directly with the histone H2A-H2B acidic patch; this interaction is not critical for nucleosome-chromatosome association but may play a role in orienting the H2AK118ub1 substrate towards the PR-DUB complex active site. Interacts with BRCA1 (via the RING finger). Interacts (via HBM-like motif) with HCFC1. Interacts (via a C-terminal region overlapping the ULD domain) with YY1; the interaction is direct and requires the interaction with HCFC1. Interacts (when phosphorylated at Thr-493) with FOXK1. Interacts (when phosphorylated at Thr-493) with FOXK2; leading to recruitment of the PR-DUB complex and repression of FOXK2 target genes. Interacts (via non-classical PY-NLS) with TNPO1/transportin-1 (via HEAT repeats 8-12); the interaction is direct, mediates BAP1 nuclear localization and disrupts BAP1 homodimerization. Interacts (via C-terminus) with KPNA1/importin alpha5 and KPNA2/importin alpha1; these interactions can contribute to BAP1 nuclear localization but are less important than the interaction with TNPO1/transportin-1. The interaction with TNPO1/transportin-1 disrupts homodimerization and blocks ubiquitination by UBE2O. Ubiquitinated: monoubiquitinated at multiple sites within its nuclear localization signal (NLS) BY UBE2O, leading to cytoplasmic retention. Able to mediate autodeubiquitination via intramolecular interactions to counteract cytoplasmic retention. Monoubiquitinated on at least 4 sites near or within its PY-NLS. Highly expressed in testis, placenta and ovary. Expressed in breast. levels in the placenta increase over the course of pregnancy.

It is found in the cytoplasm. Its subcellular location is the nucleus. The protein localises to the chromosome. It carries out the reaction Thiol-dependent hydrolysis of ester, thioester, amide, peptide and isopeptide bonds formed by the C-terminal Gly of ubiquitin (a 76-residue protein attached to proteins as an intracellular targeting signal).. Its function is as follows. Deubiquitinating enzyme that plays a key role in chromatin by mediating deubiquitination of histone H2A and HCFC1. Catalytic component of the polycomb repressive deubiquitinase (PR-DUB) complex, a complex that specifically mediates deubiquitination of histone H2A monoubiquitinated at 'Lys-120' (H2AK119ub1). Does not deubiquitinate monoubiquitinated histone H2B. The PR-DUB complex is an epigenetic regulator of gene expression and acts as a transcriptional coactivator, affecting genes involved in development, cell communication, signaling, cell proliferation and cell viability. Antagonizes PRC1 mediated H2AK119ub1 monoubiquitination. As part of the PR-DUB complex, associates with chromatin enriched in histone marks H3K4me1, H3K4me3, and H3K27Ac, but not in H3K27me3. Recruited to specific gene-regulatory regions by YY1. Acts as a regulator of cell growth by mediating deubiquitination of HCFC1 N-terminal and C-terminal chains, with some specificity toward 'Lys-48'-linked polyubiquitin chains compared to 'Lys-63'-linked polyubiquitin chains. Deubiquitination of HCFC1 does not lead to increase stability of HCFC1. Interferes with the BRCA1 and BARD1 heterodimer activity by inhibiting their ability to mediate ubiquitination and autoubiquitination. It however does not mediate deubiquitination of BRCA1 and BARD1. Able to mediate autodeubiquitination via intramolecular interactions to counteract monoubiquitination at the nuclear localization signal (NLS), thereby protecting it from cytoplasmic sequestration. Negatively regulates epithelial-mesenchymal transition (EMT) of trophoblast stem cells during placental development by regulating genes involved in epithelial cell integrity, cell adhesion and cytoskeletal organization. This Homo sapiens (Human) protein is Ubiquitin carboxyl-terminal hydrolase BAP1.